Here is a 216-residue protein sequence, read N- to C-terminus: 3-isopropylmalate dehydratase small subunit (216 aa).

Belongs to the LeuD family. LeuD type 1 subfamily. Heterodimer of LeuC and LeuD.

It catalyses the reaction (2R,3S)-3-isopropylmalate = (2S)-2-isopropylmalate. It participates in amino-acid biosynthesis; L-leucine biosynthesis; L-leucine from 3-methyl-2-oxobutanoate: step 2/4. Catalyzes the isomerization between 2-isopropylmalate and 3-isopropylmalate, via the formation of 2-isopropylmaleate. This is 3-isopropylmalate dehydratase small subunit from Cupriavidus pinatubonensis (strain JMP 134 / LMG 1197) (Cupriavidus necator (strain JMP 134)).